Here is a 350-residue protein sequence, read N- to C-terminus: Uroporphyrinogen decarboxylase (350 aa).

Substrate-binding positions include 27–31, Phe-46, Asp-76, Tyr-152, Ser-207, and His-321; that span reads RQAGR.

This sequence belongs to the uroporphyrinogen decarboxylase family. As to quaternary structure, homodimer.

The protein localises to the cytoplasm. It carries out the reaction uroporphyrinogen III + 4 H(+) = coproporphyrinogen III + 4 CO2. Its pathway is porphyrin-containing compound metabolism; protoporphyrin-IX biosynthesis; coproporphyrinogen-III from 5-aminolevulinate: step 4/4. In terms of biological role, catalyzes the decarboxylation of four acetate groups of uroporphyrinogen-III to yield coproporphyrinogen-III. The protein is Uroporphyrinogen decarboxylase of Listeria welshimeri serovar 6b (strain ATCC 35897 / DSM 20650 / CCUG 15529 / CIP 8149 / NCTC 11857 / SLCC 5334 / V8).